Consider the following 161-residue polypeptide: Urease accessory protein UreE (161 aa).

The protein belongs to the UreE family.

The protein resides in the cytoplasm. In terms of biological role, involved in urease metallocenter assembly. Binds nickel. Probably functions as a nickel donor during metallocenter assembly. This Pseudarthrobacter chlorophenolicus (strain ATCC 700700 / DSM 12829 / CIP 107037 / JCM 12360 / KCTC 9906 / NCIMB 13794 / A6) (Arthrobacter chlorophenolicus) protein is Urease accessory protein UreE.